The following is a 306-amino-acid chain: uncharacterized protein (306 aa).

A run of 9 helical transmembrane segments spans residues 13–33 (VLLS…FAFI), 53–73 (PLPM…FAWG), 86–106 (ITGL…IWAA), 112–132 (VGLT…IVPL), 147–167 (WGMM…GMLF), 177–197 (AFVS…VIAI), 214–234 (AGIA…AWLI), 246–268 (VSLI…VTFF), and 272–294 (VAVP…GYML).

The protein resides in the cell membrane. This is an uncharacterized protein from Bacillus subtilis (strain 168).